We begin with the raw amino-acid sequence, 210 residues long: MKKEIASHLLEIGAVFLQPNDPFTWSSGMKSPIYCDNRLTLSYPKVRQAIAAGLEELIKEHFPTVEVIAGTATAGIAHAAWVSDRMDLPMCYVRSKAKGHGKGNQIEGKAEKGQKVVVVEDLISTGGSAITCVEALREAGCEVLGIVSIFTYELEAGKEKLEAANVASYSLSDYSALTEVAAEKGMIGQAETKKLQEWRKDPANEAWITA.

5-phospho-alpha-D-ribose 1-diphosphate is bound by residues R94, K98, H100, and 120-128 (EDLISTGGS). S124 is a binding site for orotate.

Belongs to the purine/pyrimidine phosphoribosyltransferase family. PyrE subfamily. As to quaternary structure, homodimer. Requires Mg(2+) as cofactor.

The catalysed reaction is orotidine 5'-phosphate + diphosphate = orotate + 5-phospho-alpha-D-ribose 1-diphosphate. The protein operates within pyrimidine metabolism; UMP biosynthesis via de novo pathway; UMP from orotate: step 1/2. In terms of biological role, catalyzes the transfer of a ribosyl phosphate group from 5-phosphoribose 1-diphosphate to orotate, leading to the formation of orotidine monophosphate (OMP). This is Orotate phosphoribosyltransferase from Bacillus cereus (strain ATCC 10987 / NRS 248).